The sequence spans 554 residues: 3-(3-hydroxy-phenyl)propionate/3-hydroxycinnamic acid hydroxylase (554 aa).

Residues 17–46 (QVAIAGAGPVGLMMANYLGQMGIDVLVVEK) and 285–295 (FRIDRVLLAGD) each bind FAD.

This sequence belongs to the PheA/TfdB FAD monooxygenase family. It depends on FAD as a cofactor.

It catalyses the reaction 3-(3-hydroxyphenyl)propanoate + NADH + O2 + H(+) = 3-(2,3-dihydroxyphenyl)propanoate + NAD(+) + H2O. The enzyme catalyses (2E)-3-(3-hydroxyphenyl)prop-2-enoate + NADH + O2 + H(+) = (2E)-3-(2,3-dihydroxyphenyl)prop-2-enoate + NAD(+) + H2O. Its pathway is aromatic compound metabolism; 3-phenylpropanoate degradation. Its function is as follows. Catalyzes the insertion of one atom of molecular oxygen into position 2 of the phenyl ring of 3-(3-hydroxyphenyl)propionate (3-HPP) and hydroxycinnamic acid (3HCI). This chain is 3-(3-hydroxy-phenyl)propionate/3-hydroxycinnamic acid hydroxylase, found in Escherichia coli O8 (strain IAI1).